The following is a 276-amino-acid chain: Bis(5'-nucleosyl)-tetraphosphatase, symmetrical (276 aa).

This sequence belongs to the Ap4A hydrolase family.

It carries out the reaction P(1),P(4)-bis(5'-adenosyl) tetraphosphate + H2O = 2 ADP + 2 H(+). Hydrolyzes diadenosine 5',5'''-P1,P4-tetraphosphate to yield ADP. The chain is Bis(5'-nucleosyl)-tetraphosphatase, symmetrical from Neisseria gonorrhoeae (strain ATCC 700825 / FA 1090).